The sequence spans 103 residues: Large ribosomal subunit protein bL21 (103 aa).

The protein belongs to the bacterial ribosomal protein bL21 family. Part of the 50S ribosomal subunit. Contacts protein L20.

In terms of biological role, this protein binds to 23S rRNA in the presence of protein L20. In Azotobacter vinelandii (strain DJ / ATCC BAA-1303), this protein is Large ribosomal subunit protein bL21.